The sequence spans 88 residues: Alpha-latrotoxin associated low molecular weight protein 2 (88 aa).

A signal peptide spans 1–19; sequence MLKLICIVFLVTVLTFVVG. Cystine bridges form between C30–C66, C46–C62, and C49–C75.

It belongs to the arthropod CHH/MIH/GIH/VIH hormone family. Expressed by the venom gland.

It localises to the secreted. In terms of biological role, may increase the toxicity of alpha-latrotoxin and/or other venom components. Is non-toxic to mice and to the cockroach Periplaneta americana. The sequence is that of Alpha-latrotoxin associated low molecular weight protein 2 from Latrodectus geometricus (Brown widow spider).